A 26-amino-acid polypeptide reads, in one-letter code: Turripeptide OL57 (26 aa).

Contains 2 disulfide bonds. Expressed by the venom duct.

It is found in the secreted. Acts as a neurotoxin by inhibiting an ion channel. This Iotyrris olangoensis (Sea snail) protein is Turripeptide OL57.